The primary structure comprises 655 residues: MERACEKQDSVCNLVAVFENNRTPGEAPGSHSLEDQPHSPEHQLSLSPEPWEAPPVKEALKSEFRPVSRTYLSSLKNKLSSGAWRRSCQPGVSPGPETQEPEEKRVVRELLETEQAYVARLHLLDQVFFQELLREAGRSKAFPEDVVKLIFSNISSIYRFHAQFFLPELQRRVDDWAATPRIGDVIQKLAPFLKMYSEYVKNFERAAELLATWMDKSQPFQEVVTRIQCSEASSSLTLQHHMLEPVQRIPRYELLLKEYVQKLPAQAPDLEDAQRALDMIFSAAQHSNAAIAEMERLQGLWDVYQRLGLEDDIVDPSNTLLREGPVLKISFRRSDPMERYLVLFNNMLLYCVPRVLQVGAQFQVRTRIDVAGMKVRELTDAEFPHSFLVSGKQRTLELQARSRDEMVSWMQACQAAIDQVEKRSETFKAAVQGPQGDTQEPKPQVEELGLRAPQWVRDKMVTMCMRCQEPFNALTRRRHHCRACGYVVCAKCSDYRAELKYDSNRPNRVCLTCYTFLTGNVLPQGKEDKRRGILEKEASAAPEQSLVCSFLQLIGDKCSRSLPRSWCVIPRDDPLVLYVYAAPQDTKAHTSIPLLGYQVISGPQGDPRVFQLQQSGQQYTFKAESVELQGRWVTAIKRAASGRTPEGPDEEDVSD.

Phosphoserine occurs at positions 10, 39, and 47. 2 disordered regions span residues 21–52 and 84–103; these read NRTP…EPWE and WRRS…EPEE. Residues 32–41 show a composition bias toward basic and acidic residues; that stretch reads SLEDQPHSPE. Positions 102 to 290 constitute a DH domain; it reads EEKRVVRELL…FSAAQHSNAA (189 aa). The region spanning 319–418 is the PH 1 domain; the sequence is TLLREGPVLK…WMQACQAAID (100 aa). An FYVE-type zinc finger spans residues 458-518; it reads DKMVTMCMRC…VCLTCYTFLT (61 aa). Zn(2+)-binding residues include Cys-464, Cys-467, Cys-481, Cys-484, Cys-489, Cys-492, Cys-510, and Cys-513. Positions 544 to 641 constitute a PH 2 domain; sequence QSLVCSFLQL…WVTAIKRAAS (98 aa). Thr-644 is subject to Phosphothreonine. Ser-654 carries the post-translational modification Phosphoserine.

Lymph node, spleen, B-lymphocytes and macrophages (at protein level). Expressed at high levels in lymph node, spleen, B-lymphocytes and bone marrow macrophages. Expressed at lower levels in mature bone marrow dendritic cells. In both immature and mature B-cells, expression is down-regulated by prior B-cell receptor signaling. Expression remains high in resting B and memory cells but declines upon differentiation into plasma cells.

It localises to the cytoplasm. Its subcellular location is the nucleus. The protein localises to the early endosome. It is found in the early endosome membrane. The protein resides in the cell projection. It localises to the ruffle membrane. Its subcellular location is the cytoskeleton. Its function is as follows. Activates CDC42, a member of the Ras-like family of Rho- and Rac proteins, by exchanging bound GDP for free GTP. Activates JNK1 via CDC42 but not RAC1. Binds to phosphatidylinositol 4,5-bisphosphate, phosphatidylinositol 3,4,5-trisphosphate, phosphatidylinositol 5-monophosphate, phosphatidylinositol 4-monophosphate and phosphatidylinositol 3-monophosphate. The protein is FYVE, RhoGEF and PH domain-containing protein 2 (Fgd2) of Mus musculus (Mouse).